Consider the following 324-residue polypeptide: uncharacterized protein (324 aa).

In terms of domain architecture, HTH lysR-type spans 1 to 58 (MDIKVMEYAAEIARRQSFTKAAEHLHIAQPSLSQQIKKLEAELGLTLFHRSHGSVTLT). Residues 18–37 (FTKAAEHLHIAQPSLSQQIK) constitute a DNA-binding region (H-T-H motif).

Belongs to the LysR transcriptional regulatory family.

This is an uncharacterized protein from Bacillus subtilis (strain 168).